Here is a 509-residue protein sequence, read N- to C-terminus: Glutamyl-tRNA(Gln) amidotransferase subunit A (509 aa).

Residues Lys-75 and Ser-150 each act as charge relay system in the active site. Catalysis depends on Ser-174, which acts as the Acyl-ester intermediate. A disordered region spans residues 471-509 (DWHKRRPPLGQPPLEQAQGTAQQPKAKSKSTKGSKKSKS). The span at 496–509 (AKSKSTKGSKKSKS) shows a compositional bias: basic residues.

It belongs to the amidase family. GatA subfamily. In terms of assembly, heterotrimer of A, B and C subunits.

It catalyses the reaction L-glutamyl-tRNA(Gln) + L-glutamine + ATP + H2O = L-glutaminyl-tRNA(Gln) + L-glutamate + ADP + phosphate + H(+). Allows the formation of correctly charged Gln-tRNA(Gln) through the transamidation of misacylated Glu-tRNA(Gln) in organisms which lack glutaminyl-tRNA synthetase. The reaction takes place in the presence of glutamine and ATP through an activated gamma-phospho-Glu-tRNA(Gln). In Synechococcus sp. (strain JA-3-3Ab) (Cyanobacteria bacterium Yellowstone A-Prime), this protein is Glutamyl-tRNA(Gln) amidotransferase subunit A.